A 117-amino-acid polypeptide reads, in one-letter code: Large ribosomal subunit protein bL19 (117 aa).

It belongs to the bacterial ribosomal protein bL19 family.

This protein is located at the 30S-50S ribosomal subunit interface and may play a role in the structure and function of the aminoacyl-tRNA binding site. The polypeptide is Large ribosomal subunit protein bL19 (Photorhabdus laumondii subsp. laumondii (strain DSM 15139 / CIP 105565 / TT01) (Photorhabdus luminescens subsp. laumondii)).